Consider the following 161-residue polypeptide: Beta-lactoglobulin-1 (161 aa).

Disulfide bonds link C66–C159 and C106–C119.

It belongs to the calycin superfamily. Lipocalin family. In terms of assembly, monomer. Synthesized in mammary gland and secreted in milk.

It is found in the secreted. Functionally, primary component of whey, it binds retinol and is probably involved in the transport of that molecule. This Canis lupus familiaris (Dog) protein is Beta-lactoglobulin-1 (LGB1).